The chain runs to 84 residues: Small ribosomal subunit protein uS17 (84 aa).

The protein belongs to the universal ribosomal protein uS17 family. In terms of assembly, part of the 30S ribosomal subunit.

Its function is as follows. One of the primary rRNA binding proteins, it binds specifically to the 5'-end of 16S ribosomal RNA. The protein is Small ribosomal subunit protein uS17 of Vibrio vulnificus (strain CMCP6).